A 316-amino-acid polypeptide reads, in one-letter code: 4-hydroxy-3-methylbut-2-enyl diphosphate reductase (316 aa).

[4Fe-4S] cluster is bound at residue cysteine 12. Histidine 41 and histidine 74 together coordinate (2E)-4-hydroxy-3-methylbut-2-enyl diphosphate. Dimethylallyl diphosphate is bound by residues histidine 41 and histidine 74. Positions 41 and 74 each coordinate isopentenyl diphosphate. [4Fe-4S] cluster is bound at residue cysteine 96. Histidine 124 is a (2E)-4-hydroxy-3-methylbut-2-enyl diphosphate binding site. Histidine 124 is a binding site for dimethylallyl diphosphate. Isopentenyl diphosphate is bound at residue histidine 124. The active-site Proton donor is the glutamate 126. Threonine 169 lines the (2E)-4-hydroxy-3-methylbut-2-enyl diphosphate pocket. Cysteine 199 lines the [4Fe-4S] cluster pocket. Positions 227, 228, 229, and 271 each coordinate (2E)-4-hydroxy-3-methylbut-2-enyl diphosphate. Residues serine 227, serine 228, asparagine 229, and serine 271 each contribute to the dimethylallyl diphosphate site. Residues serine 227, serine 228, asparagine 229, and serine 271 each contribute to the isopentenyl diphosphate site.

This sequence belongs to the IspH family. The cofactor is [4Fe-4S] cluster.

It catalyses the reaction isopentenyl diphosphate + 2 oxidized [2Fe-2S]-[ferredoxin] + H2O = (2E)-4-hydroxy-3-methylbut-2-enyl diphosphate + 2 reduced [2Fe-2S]-[ferredoxin] + 2 H(+). The enzyme catalyses dimethylallyl diphosphate + 2 oxidized [2Fe-2S]-[ferredoxin] + H2O = (2E)-4-hydroxy-3-methylbut-2-enyl diphosphate + 2 reduced [2Fe-2S]-[ferredoxin] + 2 H(+). It functions in the pathway isoprenoid biosynthesis; dimethylallyl diphosphate biosynthesis; dimethylallyl diphosphate from (2E)-4-hydroxy-3-methylbutenyl diphosphate: step 1/1. Its pathway is isoprenoid biosynthesis; isopentenyl diphosphate biosynthesis via DXP pathway; isopentenyl diphosphate from 1-deoxy-D-xylulose 5-phosphate: step 6/6. Catalyzes the conversion of 1-hydroxy-2-methyl-2-(E)-butenyl 4-diphosphate (HMBPP) into a mixture of isopentenyl diphosphate (IPP) and dimethylallyl diphosphate (DMAPP). Acts in the terminal step of the DOXP/MEP pathway for isoprenoid precursor biosynthesis. The sequence is that of 4-hydroxy-3-methylbut-2-enyl diphosphate reductase from Xylella fastidiosa (strain M12).